Consider the following 371-residue polypeptide: MSL complex subunit 3B (371 aa).

Disordered regions lie at residues 1 to 44 (MATL…READ) and 160 to 229 (EERA…SPQA). Residues 8-44 (PKDDGEGKDEGGSDRGDGDPKPKGKKEVEAHTRREAD) show a composition bias toward basic and acidic residues. The MRG domain maps to 44 to 367 (DERAVRIPIP…CEAHYSSKNP (324 aa)). Over residues 206-216 (APRRSTRHSTH) the composition is skewed to basic residues.

Its subcellular location is the nucleus. Its function is as follows. Probable non-catalytic component of the MSL histone acetyltransferase complex, a multiprotein complex that mediates the majority of histone H4 acetylation at 'Lys-16' (H4K16ac), an epigenetic mark that prevents chromatin compaction. The sequence is that of MSL complex subunit 3B from Rattus norvegicus (Rat).